The sequence spans 636 residues: Threonine--tRNA ligase (636 aa).

One can recognise a TGS domain in the interval 1–59 (MPIITLPDGTKKIFEQVVSVEQVAKSMGLVKAALAGEVDGELVSTSFLIKTDANLTIIT). A catalytic region spans residues 240-531 (DHRKIGKTQD…LIEHYEGAYP (292 aa)). Zn(2+) contacts are provided by cysteine 331, histidine 382, and histidine 508.

The protein belongs to the class-II aminoacyl-tRNA synthetase family. As to quaternary structure, homodimer. Zn(2+) is required as a cofactor.

It localises to the cytoplasm. It carries out the reaction tRNA(Thr) + L-threonine + ATP = L-threonyl-tRNA(Thr) + AMP + diphosphate + H(+). Catalyzes the attachment of threonine to tRNA(Thr) in a two-step reaction: L-threonine is first activated by ATP to form Thr-AMP and then transferred to the acceptor end of tRNA(Thr). Also edits incorrectly charged L-seryl-tRNA(Thr). This Vesicomyosocius okutanii subsp. Calyptogena okutanii (strain HA) protein is Threonine--tRNA ligase.